The sequence spans 957 residues: Vacuolar membrane protease (957 aa).

Topologically, residues 1-10 are cytoplasmic; sequence MARYNPFSFT. A helical membrane pass occupies residues 11-31; the sequence is PGPVVFFTTVIYVGLFAALLV. Topologically, residues 32–369 are vacuolar; the sequence is THLTVPDYPS…RVFVVFQLHT (338 aa). Asn-48, Asn-105, and Asn-136 each carry an N-linked (GlcNAc...) asparagine glycan. 2 residues coordinate Zn(2+): His-152 and Asp-164. Glu-198 functions as the Proton acceptor in the catalytic mechanism. Residues Glu-199, Glu-224, and His-297 each contribute to the Zn(2+) site. The chain crosses the membrane as a helical span at residues 370-390; it reads LFALCVTLLVVAPIALIGLTF. At 391–423 the chain is on the cytoplasmic side; it reads GLSKADKNYLLARKAFVYSSDDDNPVQLYGWRG. Residues 424 to 444 traverse the membrane as a helical segment; it reads FFRFPIVFVSATAVVVALAYL. At 445–450 the chain is on the vacuolar side; it reads LVRFNA. Residues 451 to 471 traverse the membrane as a helical segment; the sequence is FIIYSSPFAVWSMMLSAWFFV. Residues 472 to 490 are Cytoplasmic-facing; it reads AWFFSRGADAMRPSALQRM. A helical transmembrane segment spans residues 491-511; the sequence is YALIWLFIGSFVLLTIITVFV. Over 512-521 the chain is Vacuolar; sequence NNYQVVAGYP. The helical transmembrane segment at 522-542 threads the bilayer; that stretch reads ALFYFAVVFAALMLSYLELFF. Residues 543 to 642 are Cytoplasmic-facing; that stretch reads APTKSAYARH…YPGEQEWSGK (100 aa). Disordered stretches follow at residues 560–591 and 603–628; these read RRNSESASRPLTGSTTAARSDDRPVADDDATE and FTRYGSRRDSTSEGDEDHAQGSRRLD. The segment covering 564-577 has biased composition (polar residues); that stretch reads ESASRPLTGSTTAA. Residues 643 to 663 traverse the membrane as a helical segment; the sequence is LPSWIWIIQLLLLAPLVIVLV. At 664-685 the chain is on the vacuolar side; it reads GQVALLLTSALYQTPSDGNSPL. A helical transmembrane segment spans residues 686-706; sequence FIYLAIAALSVLLLAPTGPFI. The Cytoplasmic segment spans residues 707 to 713; sequence HRFTYHV. The chain crosses the membrane as a helical span at residues 714-734; sequence PTFLFLVCLATVIYNLVAFPF. Residues 735–957 lie on the Vacuolar side of the membrane; it reads SRDHRLKVYF…LVEGFKQFEI (223 aa). 3 N-linked (GlcNAc...) asparagine glycosylation sites follow: Asn-782, Asn-818, and Asn-834.

This sequence belongs to the peptidase M28 family. Requires Zn(2+) as cofactor.

It localises to the vacuole membrane. In terms of biological role, may be involved in vacuolar sorting and osmoregulation. The protein is Vacuolar membrane protease of Pyrenophora tritici-repentis (strain Pt-1C-BFP) (Wheat tan spot fungus).